Reading from the N-terminus, the 701-residue chain is DUF724 domain-containing protein 6 (701 aa).

Disordered stretches follow at residues 299-353 (MKTK…KRAN) and 374-452 (VEPV…DESC). Residues 326–340 (LNLEKSAETLTKAES) show a composition bias toward basic and acidic residues. Residues 381 to 399 (RVRTATPLKQTKADTQGKS) are compositionally biased toward polar residues. Composition is skewed to basic and acidic residues over residues 403 to 412 (KTLEPMRDEN), 421 to 430 (KVLEEKNSEK), and 437 to 449 (RQEE…KETD). The 187-residue stretch at 514–700 (LPFAKKSPFW…LEFQSTASAP (187 aa)) folds into the DUF724 domain. A coiled-coil region spans residues 626–670 (LEKKIEAGEIEGHTYEEEMAELELKILELKRQQVVAKEMKEATDK).

As to expression, expressed in roots, stems and flowers.

The protein resides in the nucleus. Its function is as follows. May be involved in the polar growth of plant cells via transportation of RNAs. In Arabidopsis thaliana (Mouse-ear cress), this protein is DUF724 domain-containing protein 6.